A 528-amino-acid polypeptide reads, in one-letter code: Golgi resident protein GCP60 (528 aa).

The interval 1 to 71 (MAAVLNAERL…EAAAGGAAEE (71 aa)) is disordered. A2 bears the N-acetylalanine; in Golgi resident protein GCP60, N-terminally processed mark. S13 carries the phosphoserine modification. The residue at position 18 (T18) is a Phosphothreonine. Residues S20, S43, and S47 each carry the phosphoserine modification. Pro residues predominate over residues 34–45 (LLPPPLPPPSPP). The segment covering 54-69 (SGEQPEPGEAAAGGAA) has biased composition (low complexity). The ACB domain occupies 83 to 174 (LEELYGLALR…LNRCCHLFST (92 aa)). Positions 174–257 (TYVASHKIEK…AALNSQTAVQ (84 aa)) form a coiled coil. Residues 182–230 (EKEEQEKKRKEEEERRRREEEERERLQKEEEKRRREEEERLRREEEERR) are disordered. A charged amino-acid region (CAR) region spans residues 182–240 (EKEEQEKKRKEEEERRRREEEERERLQKEEEKRRREEEERLRREEEERRRIEEERLRLE). The q domain; Interaction with PI4KB, TBC1D22A and TBC1D22B stretch occupies residues 241–308 (QQKQQIMAAL…QQQAALQKQQ (68 aa)). Positions 335–362 (NGQAKTHTDSSEKELEPEAAEEALENGP) are disordered. Positions 340-350 (THTDSSEKELE) are enriched in basic and acidic residues. The GOLD domain occupies 384–526 (KEKIQQDADS…SKSVYYRVYY (143 aa)). The segment at 514–516 (LWR) is membrane-binding.

In terms of assembly, homodimer. Interacts with the C-terminal cytoplasmic domain of giantin/GOLGB1. Interacts with PBR and PKA regulatory subunit RI-alpha. Does not interact with PKA regulatory subunit RI-beta nor PKA regulatory subunit RII-alpha. Interacts (via Q domain) with PI4KB (via N-terminus). Interacts (via Q domain) with TBC1D22A and TBC1D22B; interactions with PI4KB and with TBC1D22A and TBC1D22B are mutually exclusive. Interacts with C10ORF76 and RAB11B. (Microbial infection) Interacts (via GOLD domain) with 3A proteins from various picornaviruses, including poliovirus, enterovirus A71, enterovirus D68, hepatitis A virus, human parechovirus 1, poliovirus, Human rhinovirus-14 (Hrv-14), coysackievirus B2, coysackievirus B3, coysackievirus B5, Aichi virus and human klassevirus. Interacts (via GOLD domain) with Aichi virus protein 3A; this interaction allows the formation of a 3A/ACBD3/PI4KB complex in order to synthesize PI4P at the viral RNA replication sites. Interacts with Aichi virus protein 2B. Interacts with Aichi virus protein 2C. As to expression, ubiquitous, with highest expression in testis and ovary.

It localises to the golgi apparatus membrane. The protein localises to the mitochondrion. Its function is as follows. Involved in the maintenance of Golgi structure by interacting with giantin, affecting protein transport between the endoplasmic reticulum and Golgi. Involved in hormone-induced steroid biosynthesis in testicular Leydig cells. Recruits PI4KB to the Golgi apparatus membrane; enhances the enzyme activity of PI4KB activity via its membrane recruitment thereby increasing the local concentration of the substrate in the vicinity of the kinase. In terms of biological role, (Microbial infection) Plays an essential role in Aichi virus RNA replication by recruiting PI4KB at the viral replication sites. The chain is Golgi resident protein GCP60 (ACBD3) from Homo sapiens (Human).